Here is a 243-residue protein sequence, read N- to C-terminus: Probable phosphatase CLI_3563 (243 aa).

The Zn(2+) site is built by H8, H10, H16, H41, E74, H102, H132, D192, and H194.

It belongs to the PHP family. The cofactor is Zn(2+).

This chain is Probable phosphatase CLI_3563, found in Clostridium botulinum (strain Langeland / NCTC 10281 / Type F).